The chain runs to 132 residues: Seminal vesicle protein SVP-2 (132 aa).

An N-terminal signal peptide occupies residues 1–14 (HLALLLILENQASG). Positions 33–81 (HKEEVEESESSRGQDFDKRRFWEKDDPTGEHVSVRHEHLEKSHIRFKED) are enriched in basic and acidic residues. Disordered regions lie at residues 33–104 (HKEE…LKRH) and 113–132 (VEDQ…MQRV). The propeptide occupies 104–132 (HDAMEELVSVEDQALANGADPGKSNMQRV).

The protein to the SVP-1/-3/-4 precursor, particularly in regions where protein processing must occur.

It is found in the secreted. This chain is Seminal vesicle protein SVP-2, found in Cavia porcellus (Guinea pig).